The chain runs to 223 residues: Imidazoleglycerol-phosphate dehydratase (223 aa).

This sequence belongs to the imidazoleglycerol-phosphate dehydratase family.

The catalysed reaction is D-erythro-1-(imidazol-4-yl)glycerol 3-phosphate = 3-(imidazol-4-yl)-2-oxopropyl phosphate + H2O. It participates in amino-acid biosynthesis; L-histidine biosynthesis; L-histidine from 5-phospho-alpha-D-ribose 1-diphosphate: step 6/9. This is Imidazoleglycerol-phosphate dehydratase (HIS3) from Candida albicans (Yeast).